The following is a 394-amino-acid chain: S-adenosylmethionine synthase (394 aa).

Residue histidine 15 participates in ATP binding. Residue aspartate 17 participates in Mg(2+) binding. Residue glutamate 43 coordinates K(+). L-methionine is bound by residues glutamate 56 and glutamine 99. Positions 99–109 (QSPDIALGVNK) are flexible loop. Residues 173–175 (DGK), 239–240 (RF), aspartate 248, 254–255 (RK), alanine 271, and lysine 275 each bind ATP. Aspartate 248 contacts L-methionine. Lysine 279 is an L-methionine binding site.

Belongs to the AdoMet synthase family. As to quaternary structure, homotetramer; dimer of dimers. It depends on Mg(2+) as a cofactor. K(+) serves as cofactor.

Its subcellular location is the cytoplasm. It catalyses the reaction L-methionine + ATP + H2O = S-adenosyl-L-methionine + phosphate + diphosphate. The protein operates within amino-acid biosynthesis; S-adenosyl-L-methionine biosynthesis; S-adenosyl-L-methionine from L-methionine: step 1/1. In terms of biological role, catalyzes the formation of S-adenosylmethionine (AdoMet) from methionine and ATP. The overall synthetic reaction is composed of two sequential steps, AdoMet formation and the subsequent tripolyphosphate hydrolysis which occurs prior to release of AdoMet from the enzyme. This is S-adenosylmethionine synthase from Kosmotoga olearia (strain ATCC BAA-1733 / DSM 21960 / TBF 19.5.1).